We begin with the raw amino-acid sequence, 556 residues long: Formate--tetrahydrofolate ligase 1 (556 aa).

65–72 (TPAGEGKS) serves as a coordination point for ATP.

This sequence belongs to the formate--tetrahydrofolate ligase family.

It catalyses the reaction (6S)-5,6,7,8-tetrahydrofolate + formate + ATP = (6R)-10-formyltetrahydrofolate + ADP + phosphate. Its pathway is one-carbon metabolism; tetrahydrofolate interconversion. The polypeptide is Formate--tetrahydrofolate ligase 1 (Streptococcus pyogenes serotype M28 (strain MGAS6180)).